Reading from the N-terminus, the 513-residue chain is Histone acetyltransferase KAT5 (513 aa).

The region spanning 8 to 65 is the Tudor-knot domain; the sequence is IEGCRLPVLRRNQDNEDEWPLAEILSVKDISGRKLFYVHYIDFNKRLDEWVTHERLDL. An N6-acetyllysine modification is found at K52. Residues 69–106 are disordered; that stretch reads QFPKKEAKTPTKNGLPGSRPGSPEREVPASAQASGKTL. S86 bears the Phosphoserine mark. Residue S90 is modified to Phosphoserine; by CDK1 and CDK9. Residues K104 and K120 each carry the N6-acetyllysine; by autocatalysis modification. Residues 122–217 form a disordered region; it reads REAIPGGEPD…SAPRMTGSLV (96 aa). Positions 133-144 are enriched in polar residues; it reads PLSSSSCLQPNH. K148, K150, K187, and K189 each carry N6-acetyllysine; by autocatalysis. Residue S199 is modified to Phosphoserine. The MYST-type HAT domain maps to 227–504; that stretch reads TRMKNIECIE…IDSKCLHFTP (278 aa). A C2HC MYST-type zinc finger spans residues 260–285; the sequence is LYLCEFCLKYGRSLKCLQRHLTKCDL. K327 bears the N6-acetyllysine; by autocatalysis mark. Positions 368–513 are interaction with ATF2; it reads ACILTLPPYQ…PKDWSKRGKW (146 aa). Residues 370–372 and 377–383 contribute to the acetyl-CoA site; these read ILT and QRRGYGK. The active-site Proton donor/acceptor is E403. 2 residues coordinate acetyl-CoA: S407 and S416. K430 is covalently cross-linked (Glycyl lysine isopeptide (Lys-Gly) (interchain with G-Cter in SUMO1); alternate). A Glycyl lysine isopeptide (Lys-Gly) (interchain with G-Cter in SUMO2); alternate cross-link involves residue K430. K451 is covalently cross-linked (Glycyl lysine isopeptide (Lys-Gly) (interchain with G-Cter in SUMO1)).

This sequence belongs to the MYST (SAS/MOZ) family. Component of the NuA4 histone acetyltransferase complex which contains the catalytic subunit KAT5/TIP60 and the subunits EP400, TRRAP/PAF400, BRD8/SMAP, EPC1, DMAP1/DNMAP1, RUVBL1/TIP49, RUVBL2, ING3, actin, ACTL6A/BAF53A, MORF4L1/MRG15, MORF4L2/MRGX, MRGBP, YEATS4/GAS41, VPS72/YL1 and MEAF6. KAT5/TIP60, EPC1, and ING3 together constitute a minimal HAT complex termed Piccolo NuA4. The NuA4 complex interacts with MYC. Interacts with ATM. Interacts with JADE1. Interacts with PLA2G4A/CPLA2, EDNRA and HDAC7. Interacts with the cytoplasmic tail of APP and APBB1/FE65. Interacts with TRIM24 and TRIM68. Forms a complex with SENP6 and UBE2I in response to UV irradiation. Identified in a complex with HINT1. Interacts with ATF2 and CUL3. Interacts with NR1D2 (via N-terminus). Component of a SWR1-like complex. Interacts with FOXP3. Interacts with ZBTB49. Interacts with SRF. Interacts with ATF3; promoting autoacetylation and deubiquitination by USP7. Interacts with EP300/p300; interaction promotes KAT5 autoacetylation. Interacts with PRKDC; interaction is impaired following KAT5 sumoylation. Interacts with GPR50. Interacts with NME3; this interaction enables recruitment of NME3 at DNA damage sites where it plays a role in the repair of DNA. Post-translationally, phosphorylated on Ser-86 and Ser-90; enhanced during G2/M phase. The phosphorylated form has a higher activity. Phosphorylation at Ser-90 by CDK1 or CDK9 is a prerequisite for phosphorylation at Ser-86 by GSK3. Phosphorylation at Ser-86 by GSK3 (GSK3A or GSK3B) activates acetyltransferase and acyltransferase activity. Phosphorylation at Ser-90 by CDK9 promotes KAT5 recruitment to chromatin. Phosphorylation by VRK1 following DNA damage promotes KAT5 association with chromatin and histone acetyltransferase activity. Autoacetylated. Autoacetylation is required for histone acetyltransferase activity. Autoacetylation at Lys-327 is facilitated by interaction with EP300/p300: it prevents ubiquitination and subsequent degradation by the proteasome and promotes acetylation of target proteins. Deacetylated by HDAC3 and SIRT1. Deacetylation by HDAC3 promotes its ubiquitination and cytoplasmic localization. In terms of processing, sumoylated by UBE2I at Lys-430 and Lys-451, leading to increase of its histone acetyltransferase activity in UV-induced DNA damage response, as well as its translocation to nuclear bodies. Sumoylation with SUMO2 by PIAS4 at Lys-430 promotes repair of DNA double-strand breaks (DSBs) via homologous recombination (HR). Sumoylation by PIAS4 impairs interaction with PRKDC, inhibiting non-homologous end joining (NHEJ)-mediated repair of DSBs, thereby facilitating HR. Desumoylated by SENP3. Post-translationally, ubiquitinated by MDM2, leading to its proteasome-dependent degradation. Ubiquitination is prevented by autoacetylation at Lys-327. Ubiquitinated following deacetylation by HDAC3, leading to cytoplasmic localization. Deubiquitinated by USP7 following interaction with ATF3, promoting its stabilization. Expressed in testis, heart, brain, kidney and liver. Weakly expressed in lung.

The protein localises to the nucleus. The protein resides in the chromosome. It localises to the cytoplasm. It is found in the centromere. Its subcellular location is the kinetochore. The protein localises to the cytoskeleton. The protein resides in the spindle pole. It localises to the nucleolus. It is found in the perinuclear region. The catalysed reaction is L-lysyl-[histone] + acetyl-CoA = N(6)-acetyl-L-lysyl-[histone] + CoA + H(+). It carries out the reaction L-lysyl-[protein] + acetyl-CoA = N(6)-acetyl-L-lysyl-[protein] + CoA + H(+). It catalyses the reaction (2E)-butenoyl-CoA + L-lysyl-[protein] = N(6)-(2E)-butenoyl-L-lysyl-[protein] + CoA + H(+). The enzyme catalyses 2-hydroxyisobutanoyl-CoA + L-lysyl-[protein] = N(6)-(2-hydroxyisobutanoyl)-L-lysyl-[protein] + CoA + H(+). The catalysed reaction is (S)-lactoyl-CoA + L-lysyl-[protein] = N(6)-[(S)-lactoyl]-L-lysyl-[protein] + CoA + H(+). With respect to regulation, acyltransferase and acetyltransferase activities are activated by phosphorylation and autoacetylation. Autoacetylation activates the histone acetyltransferase activity. Catalytic subunit of the NuA4 histone acetyltransferase complex, a multiprotein complex involved in transcriptional activation of select genes principally by acetylation of nucleosomal histones H2A and H4. Histone acetylation alters nucleosome-DNA interactions and promotes interaction of the modified histones with other proteins which positively regulate transcription. The NuA4 histone acetyltransferase complex is required for the activation of transcriptional programs associated with proto-oncogene mediated growth induction, tumor suppressor mediated growth arrest and replicative senescence, apoptosis, and DNA repair. The NuA4 complex plays a direct role in repair of DNA double-strand breaks (DSBs) by promoting homologous recombination (HR): the complex inhibits TP53BP1 binding to chromatin via MBTD1, which recognizes and binds histone H4 trimethylated at 'Lys-20' (H4K20me), and KAT5 that catalyzes acetylation of 'Lys-15' of histone H2A (H2AK15ac), thereby blocking the ubiquitination mark required for TP53BP1 localization at DNA breaks. Also involved in DSB repair by mediating acetylation of 'Lys-5' of histone H2AX (H2AXK5ac), promoting NBN/NBS1 assembly at the sites of DNA damage. The NuA4 complex plays a key role in hematopoietic stem cell maintenance and is required to maintain acetylated H2A.Z/H2AZ1 at MYC target genes. The NuA4 complex is also required for spermatid development by promoting acetylation of histones: histone hyperacetylation is required for histone replacement during the transition from round to elongating spermatids. Component of a SWR1-like complex that specifically mediates the removal of histone H2A.Z/H2AZ1 from the nucleosome. Also acetylates non-histone proteins, such as BMAL1, ATM, AURKB, CHKA, CGAS, ERCC4/XPF, LPIN1, TP53/p53, NDC80/HEC1, NR1D2, RAN, SOX4, FOXP3, SQSTM1, ULK1 and RUBCNL/Pacer. Directly acetylates and activates ATM. Promotes nucleotide excision repair (NER) by mediating acetylation of ERCC4/XPF, thereby promoting formation of the ERCC4-ERCC1 complex. Relieves NR1D2-mediated inhibition of APOC3 expression by acetylating NR1D2. Acts as a regulator of regulatory T-cells (Treg) by catalyzing FOXP3 acetylation, thereby promoting FOXP3 transcriptional repressor activity. Involved in skeletal myoblast differentiation by mediating acetylation of SOX4. Catalyzes acetylation of APBB1/FE65, increasing its transcription activator activity. Promotes transcription elongation during the activation phase of the circadian cycle by catalyzing acetylation of BMAL1, promoting elongation of circadian transcripts. Together with GSK3 (GSK3A or GSK3B), acts as a regulator of autophagy: phosphorylated at Ser-86 by GSK3 under starvation conditions, leading to activate acetyltransferase activity and promote acetylation of key autophagy regulators, such as ULK1 and RUBCNL/Pacer. Acts as a regulator of the cGAS-STING innate antiviral response by catalyzing acetylation the N-terminus of CGAS, thereby promoting CGAS DNA-binding and activation. Also regulates lipid metabolism by mediating acetylation of CHKA or LPIN1. Promotes lipolysis of lipid droplets following glucose deprivation by mediating acetylation of isoform 1 of CHKA, thereby promoting monomerization of CHKA and its conversion into a tyrosine-protein kinase. Acts as a regulator of fatty-acid-induced triacylglycerol synthesis by catalyzing acetylation of LPIN1, thereby promoting the synthesis of diacylglycerol. In addition to protein acetyltransferase, can use different acyl-CoA substrates, such as (2E)-butenoyl-CoA (crotonyl-CoA), S-lactoyl-CoA (lactyl-CoA) and 2-hydroxyisobutanoyl-CoA (2-hydroxyisobutyryl-CoA), and is able to mediate protein crotonylation, lactylation and 2-hydroxyisobutyrylation, respectively. Acts as a key regulator of chromosome segregation and kinetochore-microtubule attachment during mitosis by mediating acetylation or crotonylation of target proteins. Catalyzes acetylation of AURKB at kinetochores, increasing AURKB activity and promoting accurate chromosome segregation in mitosis. Acetylates RAN during mitosis, promoting microtubule assembly at mitotic chromosomes. Acetylates NDC80/HEC1 during mitosis, promoting robust kinetochore-microtubule attachment. Catalyzes crotonylation of MAPRE1/EB1, thereby ensuring accurate spindle positioning in mitosis. Catalyzes lactylation of NBN/NBS1 in response to DNA damage, thereby promoting DNA double-strand breaks (DSBs) via homologous recombination (HR). This chain is Histone acetyltransferase KAT5, found in Mus musculus (Mouse).